The following is a 585-amino-acid chain: Pyruvate kinase (585 aa).

A substrate-binding site is contributed by R32. Residues N34, S36, D66, and T67 each coordinate K(+). 34–37 (NFSH) is an ATP binding site. The ATP site is built by R73 and K156. E221 serves as a coordination point for Mg(2+). Substrate is bound by residues G244, D245, and T277. D245 provides a ligand contact to Mg(2+).

This sequence belongs to the pyruvate kinase family. It in the C-terminal section; belongs to the PEP-utilizing enzyme family. Requires Mg(2+) as cofactor. It depends on K(+) as a cofactor.

It catalyses the reaction pyruvate + ATP = phosphoenolpyruvate + ADP + H(+). The protein operates within carbohydrate degradation; glycolysis; pyruvate from D-glyceraldehyde 3-phosphate: step 5/5. The protein is Pyruvate kinase (pyk) of Staphylococcus aureus (strain USA300).